Here is a 356-residue protein sequence, read N- to C-terminus: Acyl-coenzyme A diphosphatase NUDT19 (356 aa).

The 232-residue stretch at 10 to 241 folds into the Nudix hydrolase domain; that stretch reads AATVMLAAGW…IWLAPPQFYE (232 aa). Positions 72–94 are disordered; that stretch reads PRFGLGPEPPRQPPFPGLSHGDA. Residues 78 to 87 show a composition bias toward pro residues; the sequence is PEPPRQPPFP. The Nudix box signature appears at 97–118; it reads AALPDDVALRICAIRETFEEAG. Mg(2+)-binding residues include E112 and E116. An N6-succinyllysine modification is found at K299. A Microbody targeting signal motif is present at residues 354–356; that stretch reads ARL.

This sequence belongs to the Nudix hydrolase family. Monomer. Mg(2+) serves as cofactor. Mn(2+) is required as a cofactor.

It localises to the peroxisome. It carries out the reaction an acyl-CoA + H2O = an acyl-4'-phosphopantetheine + adenosine 3',5'-bisphosphate + 2 H(+). The catalysed reaction is CoA + H2O = (R)-4'-phosphopantetheine + adenosine 3',5'-bisphosphate + 2 H(+). It catalyses the reaction hexanoyl-CoA + H2O = hexanoyl-4'-phosphopantetheine + adenosine 3',5'-bisphosphate + 2 H(+). The enzyme catalyses octanoyl-CoA + H2O = S-octanoyl-4'-phosphopantetheine + adenosine 3',5'-bisphosphate + 2 H(+). It carries out the reaction butanoyl-CoA + H2O = S-butanoyl-4'-phosphopantetheine + adenosine 3',5'-bisphosphate + 2 H(+). The catalysed reaction is propanoyl-CoA + H2O = propanoyl-4'-phosphopantetheine + adenosine 3',5'-bisphosphate + 2 H(+). It catalyses the reaction malonyl-CoA + H2O = malonyl-4'-phosphopantetheine + adenosine 3',5'-bisphosphate + 2 H(+). The enzyme catalyses succinyl-CoA + H2O = succinyl-4'-phosphopantetheine + adenosine 3',5'-bisphosphate + 2 H(+). It carries out the reaction choloyl-CoA + H2O = S-choloyl-4'-phosphopantetheine + adenosine 3',5'-bisphosphate + 2 H(+). The catalysed reaction is 4,8-dimethylnonanoyl-CoA + H2O = S-(4,8-dimethylnonanoyl)-4'-phosphopantetheine + adenosine 3',5'-bisphosphate + 2 H(+). It catalyses the reaction (9Z,12Z,15Z)-octadecatrienoyl-CoA + H2O = S-(9Z,12Z,15Z-octadecatrienoyl)-4'-phosphopantetheine + adenosine 3',5'-bisphosphate + 2 H(+). The enzyme catalyses (9Z,12Z)-octadecadienoyl-CoA + H2O = S-(9Z,12Z-octadecadienoyl)-4'-phosphopantetheine + adenosine 3',5'-bisphosphate + 2 H(+). It carries out the reaction (9Z)-hexadecenoyl-CoA + H2O = S-(9Z-hexadecenoyl)-4'-phosphopantetheine + adenosine 3',5'-bisphosphate + 2 H(+). The catalysed reaction is (9Z)-tetradecenoyl-CoA + H2O = S-(9Z-tetradecenoyl)-4'-phosphopantetheine + adenosine 3',5'-bisphosphate + 2 H(+). It catalyses the reaction (6Z)-octenoyl-CoA + H2O = S-(6Z-octenoyl)-4'-phosphopantetheine + adenosine 3',5'-bisphosphate + 2 H(+). The enzyme catalyses hexadecanoyl-CoA + H2O = S-hexadecanoyl-4'-phosphopantetheine + adenosine 3',5'-bisphosphate + 2 H(+). It carries out the reaction tetradecanoyl-CoA + H2O = tetradecanoyl-4'-phosphopantetheine + adenosine 3',5'-bisphosphate + 2 H(+). The catalysed reaction is dodecanoyl-CoA + H2O = S-dodecanoyl-4'-phosphopantetheine + adenosine 3',5'-bisphosphate + 2 H(+). It catalyses the reaction a 5'-end CoA-ribonucleoside in mRNA + H2O = a 5'-end phospho-adenosine-phospho-ribonucleoside in mRNA + (R)-4'-phosphopantetheine + 2 H(+). Fatty acyl-coenzyme A (CoA) diphosphatase that hydrolyzes fatty acyl-CoA to yield acyl-4'-phosphopantetheine and adenosine 3',5'-bisphosphate. Mediates the hydrolysis of a wide range of CoA esters, including choloyl-CoA and branched-chain fatty-acyl-CoA esters and at low substrate concentrations medium and long-chain fatty-acyl-CoA esters are the primary substrates. Highest activity seen with medium-chain acyl-CoA esters and higher rates of activity seen with the unsaturated acyl-CoA esters compared with the saturated esters. Exhibits decapping activity towards dpCoA-capped RNAs in vitro. The chain is Acyl-coenzyme A diphosphatase NUDT19 (Nudt19) from Mus saxicola (Brown spiny mouse).